Reading from the N-terminus, the 289-residue chain is Splicing factor C9orf78 (289 aa).

Residues 1–12 show a composition bias toward basic residues; that stretch reads MPVVRKIFRRRR. Positions 1–27 are disordered; that stretch reads MPVVRKIFRRRRGDSESEEDEQDSEEV. Positions 5–58 are interaction with SNRNP200; that stretch reads RKIFRRRRGDSESEEDEQDSEEVRLKLEETREVQNLRKRPNGVSAVALLVGEKV. A phosphoserine mark is found at S15 and S17. At Y147 the chain carries Phosphotyrosine. Basic and acidic residues predominate over residues 232-283; that stretch reads LNAPIRRNKEEPKARPLRVGDTEKPEPERSPPNRKRPANEKATDDYHYEKFK. The tract at residues 232–289 is disordered; it reads LNAPIRRNKEEPKARPLRVGDTEKPEPERSPPNRKRPANEKATDDYHYEKFKKMNRRY. T253 is modified (phosphothreonine). S261 is subject to Phosphoserine.

The protein belongs to the TLS1 family. As to quaternary structure, component of the spliceosome. Interacts with SNRNP200; the interaction is direct. Interacts with PRPF8.

It localises to the nucleus. The protein resides in the chromosome. The protein localises to the centromere. In terms of biological role, plays a role in pre-mRNA splicing by promoting usage of the upstream 3'-splice site at alternative NAGNAG splice sites; these are sites featuring alternative acceptor motifs separated by only a few nucleotides. May also modulate exon inclusion events. Plays a role in spliceosomal remodeling by displacing WBP4 from SNRNP200 and may act to inhibit SNRNP200 helicase activity. Binds U5 snRNA. Required for proper chromosome segregation. Not required for splicing of shelterin components. In Homo sapiens (Human), this protein is Splicing factor C9orf78 (C9orf78).